The primary structure comprises 468 residues: V-type proton ATPase subunit H (468 aa).

The protein belongs to the V-ATPase H subunit family. In terms of assembly, V-ATPase is a heteromultimeric enzyme made up of two complexes: the ATP-hydrolytic V1 complex and the proton translocation V0 complex. The V1 complex consists of three catalytic AB heterodimers that form a heterohexamer, three peripheral stalks each consisting of EG heterodimers, one central rotor including subunits D and F, and the regulatory subunits C and H. The proton translocation complex V0 consists of the proton transport subunit a, a ring of proteolipid subunits c9c'', rotary subunit d, subunits e and f, and the accessory subunits VhaAC45 and ATP6AP2.

Subunit of the V1 complex of vacuolar(H+)-ATPase (V-ATPase), a multisubunit enzyme composed of a peripheral complex (V1) that hydrolyzes ATP and a membrane integral complex (V0) that translocates protons. V-ATPase is responsible for acidifying and maintaining the pH of intracellular compartments and in some cell types, is targeted to the plasma membrane, where it is responsible for acidifying the extracellular environment. Subunit H is essential for V-ATPase activity, but not for the assembly of the complex. This is V-type proton ATPase subunit H (VhaSFD) from Drosophila melanogaster (Fruit fly).